The primary structure comprises 145 residues: D-aminoacyl-tRNA deacylase (145 aa).

Residues 137–138 (GP) carry the Gly-cisPro motif, important for rejection of L-amino acids motif.

Belongs to the DTD family. As to quaternary structure, homodimer.

Its subcellular location is the cytoplasm. The enzyme catalyses glycyl-tRNA(Ala) + H2O = tRNA(Ala) + glycine + H(+). It carries out the reaction a D-aminoacyl-tRNA + H2O = a tRNA + a D-alpha-amino acid + H(+). In terms of biological role, an aminoacyl-tRNA editing enzyme that deacylates mischarged D-aminoacyl-tRNAs. Also deacylates mischarged glycyl-tRNA(Ala), protecting cells against glycine mischarging by AlaRS. Acts via tRNA-based rather than protein-based catalysis; rejects L-amino acids rather than detecting D-amino acids in the active site. By recycling D-aminoacyl-tRNA to D-amino acids and free tRNA molecules, this enzyme counteracts the toxicity associated with the formation of D-aminoacyl-tRNA entities in vivo and helps enforce protein L-homochirality. The polypeptide is D-aminoacyl-tRNA deacylase (Sodalis glossinidius (strain morsitans)).